The primary structure comprises 626 residues: Chaperone protein HtpG (626 aa).

The interval 1–331 is a; substrate-binding; sequence MSETVERHEF…TDDLPLNVSR (331 aa). The interval 332–544 is b; it reads EMLQSTPTLQ…GMGPDLQMQR (213 aa). The tract at residues 545–626 is c; the sequence is LLRRAGRGFG…GTAAKPAESA (82 aa).

The protein belongs to the heat shock protein 90 family. As to quaternary structure, homodimer.

The protein resides in the cytoplasm. Molecular chaperone. Has ATPase activity. In Methylorubrum extorquens (strain PA1) (Methylobacterium extorquens), this protein is Chaperone protein HtpG.